The following is a 398-amino-acid chain: UPF0261 protein RA0729 (398 aa).

Belongs to the UPF0261 family.

The sequence is that of UPF0261 protein RA0729 from Rhizobium meliloti (strain 1021) (Ensifer meliloti).